The following is a 353-amino-acid chain: Mitochondrial ubiquitin ligase activator of nfkb 1 (353 aa).

The Cytoplasmic segment spans residues 1 to 8 (MENGGRPS). The helical transmembrane segment at 9–29 (VGQVILLTTSSAITALFYSIY) threads the bilayer. The Mitochondrial intermembrane segment spans residues 30–239 (RHKYRSVQTL…LLEKQEVQMR (210 aa)). The chain crosses the membrane as a helical span at residues 240 to 260 (WWRILSIVFGVASCITLFFIL). Residues 261–353 (RRKYRHYKEK…IDRIVPLYNS (93 aa)) are Cytoplasmic-facing. An RING-type zinc finger spans residues 303-341 (CSICLSTEKSCVFLECGHVCSCISCYQALPSPKKCPICR).

As to quaternary structure, homooligomer.

The protein resides in the mitochondrion outer membrane. The enzyme catalyses S-ubiquitinyl-[E2 ubiquitin-conjugating enzyme]-L-cysteine + [acceptor protein]-L-lysine = [E2 ubiquitin-conjugating enzyme]-L-cysteine + N(6)-ubiquitinyl-[acceptor protein]-L-lysine.. Its pathway is protein modification; protein ubiquitination. In terms of biological role, E3 ubiquitin-protein ligase that plays a role in the control of mitochondrial morphology. Promotes mitochondrial fragmentation and influences mitochondrial localization. Inhibits cell growth. E3 ubiquitin ligases accept ubiquitin from an E2 ubiquitin-conjugating enzyme in the form of a thioester and then directly transfer the ubiquitin to targeted substrates. This is Mitochondrial ubiquitin ligase activator of nfkb 1 (mul1) from Xenopus laevis (African clawed frog).